The chain runs to 292 residues: MNKDIATPIRTKEILNKYGFSFKKSLGQNFLIDTNILDRIVDHAGVTERTGVIEIGPGIGALTEQLAKRAKKVTAFEIDQRLLPILEDTLSPYDNVTVIHQDVLKADVRAVMDEQFQDCDEVMVVANLPYYVTTPIIMKLLEENLPLKGIVVMLQKEVADRMAAKPSSKEYGSLSIAVQFYTEAKTVMNVPKTVFVPQPNVDSAVIRLTLRKEPAVAVQDAAFFFQVVKASFAQRRKTLFNNLVNNLPNGKENKSKIERALQDSHIDGKRRGESLSIEEFAVLSDRLREVLL.

S-adenosyl-L-methionine contacts are provided by Asn29, Leu31, Gly56, Glu77, Asp102, and Asn127.

It belongs to the class I-like SAM-binding methyltransferase superfamily. rRNA adenine N(6)-methyltransferase family. RsmA subfamily.

Its subcellular location is the cytoplasm. It catalyses the reaction adenosine(1518)/adenosine(1519) in 16S rRNA + 4 S-adenosyl-L-methionine = N(6)-dimethyladenosine(1518)/N(6)-dimethyladenosine(1519) in 16S rRNA + 4 S-adenosyl-L-homocysteine + 4 H(+). Specifically dimethylates two adjacent adenosines (A1518 and A1519) in the loop of a conserved hairpin near the 3'-end of 16S rRNA in the 30S particle. May play a critical role in biogenesis of 30S subunits. This Bacillus licheniformis (strain ATCC 14580 / DSM 13 / JCM 2505 / CCUG 7422 / NBRC 12200 / NCIMB 9375 / NCTC 10341 / NRRL NRS-1264 / Gibson 46) protein is Ribosomal RNA small subunit methyltransferase A.